We begin with the raw amino-acid sequence, 432 residues long: Adenylosuccinate synthetase (432 aa).

GTP contacts are provided by residues 13–19 (GDEGKGK) and 41–43 (GHT). The Proton acceptor role is filled by Asp14. Residues Asp14 and Gly41 each contribute to the Mg(2+) site. Residues 14 to 17 (DEGK), 39 to 42 (NAGH), Thr130, Arg144, Gln225, Thr240, and Arg304 contribute to the IMP site. His42 serves as the catalytic Proton donor. A substrate-binding site is contributed by 300–306 (ATTGRRR). Residues Arg306, 332-334 (KLD), and 415-417 (STG) contribute to the GTP site.

The protein belongs to the adenylosuccinate synthetase family. Homodimer. The cofactor is Mg(2+).

The protein localises to the cytoplasm. The enzyme catalyses IMP + L-aspartate + GTP = N(6)-(1,2-dicarboxyethyl)-AMP + GDP + phosphate + 2 H(+). It functions in the pathway purine metabolism; AMP biosynthesis via de novo pathway; AMP from IMP: step 1/2. Its function is as follows. Plays an important role in the de novo pathway of purine nucleotide biosynthesis. Catalyzes the first committed step in the biosynthesis of AMP from IMP. This Escherichia coli (strain K12) protein is Adenylosuccinate synthetase.